The sequence spans 125 residues: Ribosome-binding factor A (125 aa).

The protein belongs to the RbfA family. Monomer. Binds 30S ribosomal subunits, but not 50S ribosomal subunits or 70S ribosomes.

Its subcellular location is the cytoplasm. Its function is as follows. One of several proteins that assist in the late maturation steps of the functional core of the 30S ribosomal subunit. Associates with free 30S ribosomal subunits (but not with 30S subunits that are part of 70S ribosomes or polysomes). Required for efficient processing of 16S rRNA. May interact with the 5'-terminal helix region of 16S rRNA. In Xylella fastidiosa (strain M12), this protein is Ribosome-binding factor A.